We begin with the raw amino-acid sequence, 179 residues long: Ribosome maturation factor RimM (179 aa).

In terms of domain architecture, PRC barrel spans 102 to 179; it reads DGEYYWYQLE…EMKVDWDADF (78 aa).

It belongs to the RimM family. As to quaternary structure, binds ribosomal protein uS19.

It is found in the cytoplasm. In terms of biological role, an accessory protein needed during the final step in the assembly of 30S ribosomal subunit, possibly for assembly of the head region. Essential for efficient processing of 16S rRNA. May be needed both before and after RbfA during the maturation of 16S rRNA. It has affinity for free ribosomal 30S subunits but not for 70S ribosomes. The sequence is that of Ribosome maturation factor RimM from Pseudomonas savastanoi pv. phaseolicola (strain 1448A / Race 6) (Pseudomonas syringae pv. phaseolicola (strain 1448A / Race 6)).